We begin with the raw amino-acid sequence, 224 residues long: RNA-free ribonuclease P (224 aa).

It belongs to the HARP family.

It catalyses the reaction Endonucleolytic cleavage of RNA, removing 5'-extranucleotides from tRNA precursor.. RNA-free RNase P that catalyzes the removal of the 5'-leader sequence from pre-tRNA to produce the mature 5'-terminus. This Haloarcula marismortui (strain ATCC 43049 / DSM 3752 / JCM 8966 / VKM B-1809) (Halobacterium marismortui) protein is RNA-free ribonuclease P.